We begin with the raw amino-acid sequence, 219 residues long: Probable GTP-binding protein EngB (219 aa).

Residues 31-205 enclose the EngB-type G domain; the sequence is VGVEIAFAGR…LAILNEWCHP (175 aa). GTP contacts are provided by residues 39–46, 66–70, 84–87, 151–154, and 184–186; these read GRSNAGKS, GRTQL, DLPG, TKSD, and FSS. Residues S46 and T68 each contribute to the Mg(2+) site.

Belongs to the TRAFAC class TrmE-Era-EngA-EngB-Septin-like GTPase superfamily. EngB GTPase family. Mg(2+) is required as a cofactor.

In terms of biological role, necessary for normal cell division and for the maintenance of normal septation. In Shewanella baltica (strain OS223), this protein is Probable GTP-binding protein EngB.